The sequence spans 453 residues: Na(+)/H(+) antiporter NhaA 2 (453 aa).

Helical transmembrane passes span 23-43 (FLHIEAVSGIVLLIAAVAALI), 74-94 (LHFWINDGLMTIFFLVVGMEI), 111-131 (LPMAAAVGGVAVPALLYLSFG), 139-159 (GWAVPTATDIAFAVGVLALLG), 168-188 (VFLLALAIIDDIIAVLIIAFF), 191-211 (GGLDYTGFGVAVIGLLMVIGL), 214-234 (IGVGSAYAYVIPGAIVWLGIL), 235-255 (LTGAHPTLAGVVLGLMTPVTA), 316-336 (VAFGIMPVFALANAGVSLSGV), 345-365 (WVMIAVAVALVAGKPLGIVSV), 386-406 (IMLVGLLAGIGFTMSIFIANL), and 419-439 (LGVLSASLIAAVLGLTWGVWS).

It belongs to the NhaA Na(+)/H(+) (TC 2.A.33) antiporter family.

It is found in the cell inner membrane. It catalyses the reaction Na(+)(in) + 2 H(+)(out) = Na(+)(out) + 2 H(+)(in). Its function is as follows. Na(+)/H(+) antiporter that extrudes sodium in exchange for external protons. The chain is Na(+)/H(+) antiporter NhaA 2 from Pseudomonas putida (strain ATCC 47054 / DSM 6125 / CFBP 8728 / NCIMB 11950 / KT2440).